Reading from the N-terminus, the 148-residue chain is 3-dehydroquinate dehydratase (148 aa).

The Proton acceptor role is filled by Y23. N75, H81, and D88 together coordinate substrate. H101 serves as the catalytic Proton donor. Substrate is bound by residues 102–103 and R112; that span reads LS.

The protein belongs to the type-II 3-dehydroquinase family. In terms of assembly, homododecamer.

The enzyme catalyses 3-dehydroquinate = 3-dehydroshikimate + H2O. The protein operates within metabolic intermediate biosynthesis; chorismate biosynthesis; chorismate from D-erythrose 4-phosphate and phosphoenolpyruvate: step 3/7. Catalyzes a trans-dehydration via an enolate intermediate. This Halorhodospira halophila (strain DSM 244 / SL1) (Ectothiorhodospira halophila (strain DSM 244 / SL1)) protein is 3-dehydroquinate dehydratase.